Here is a 375-residue protein sequence, read N- to C-terminus: Putative F-box/kelch-repeat protein At3g24610 (375 aa).

The interval 1-27 (MSNEAPEVEPHSKRRKKEASPSSSSGF) is disordered. The 47-residue stretch at 25–71 (SGFLQSLPEAVAMICLARVSRLDHAALSLVSKSCRSMVLSPELYQTR) folds into the F-box domain. One copy of the Kelch repeat lies at 138 to 183 (KINVWGGCKYKHYYDWGEVFDPKTQTWADMSIPKPVREEKIYVVDS).

This is Putative F-box/kelch-repeat protein At3g24610 from Arabidopsis thaliana (Mouse-ear cress).